We begin with the raw amino-acid sequence, 557 residues long: Ribonuclease J 2 (557 aa).

Positions 76, 78, 144, and 166 each coordinate Zn(2+). 366 to 370 lines the substrate pocket; sequence HASSH.

The protein belongs to the metallo-beta-lactamase superfamily. RNA-metabolizing metallo-beta-lactamase-like family. Bacterial RNase J subfamily. Homodimer, may be a subunit of the RNA degradosome. Zn(2+) is required as a cofactor.

It localises to the cytoplasm. Its function is as follows. An RNase that has 5'-3' exonuclease and possibly endoonuclease activity. Involved in maturation of rRNA and in some organisms also mRNA maturation and/or decay. This chain is Ribonuclease J 2, found in Staphylococcus epidermidis (strain ATCC 35984 / DSM 28319 / BCRC 17069 / CCUG 31568 / BM 3577 / RP62A).